Consider the following 508-residue polypeptide: Probable malate:quinone oxidoreductase (508 aa).

The protein belongs to the MQO family. The cofactor is FAD.

It catalyses the reaction (S)-malate + a quinone = a quinol + oxaloacetate. It participates in carbohydrate metabolism; tricarboxylic acid cycle; oxaloacetate from (S)-malate (quinone route): step 1/1. The protein is Probable malate:quinone oxidoreductase of Chromohalobacter salexigens (strain ATCC BAA-138 / DSM 3043 / CIP 106854 / NCIMB 13768 / 1H11).